The sequence spans 676 residues: E3 ubiquitin-protein ligase ICP0 (676 aa).

The segment at cysteine 13–lysine 52 adopts an RING-type zinc-finger fold. Disordered stretches follow at residues aspartate 101–glycine 135, histidine 266–isoleucine 486, and alanine 555–glutamine 676. The span at proline 110–glycine 135 shows a compositional bias: gly residues. A compositionally biased stretch (acidic residues) spans serine 286 to glutamate 303. Low complexity predominate over residues serine 304–threonine 314. Residues alanine 315–glutamate 328 are compositionally biased toward acidic residues. Polar residues predominate over residues tyrosine 351–alanine 361. 2 stretches are compositionally biased toward low complexity: residues glycine 375–serine 388 and leucine 397–alanine 411. Residues glycine 422–serine 439 are compositionally biased toward gly residues. Over residues glutamate 440–leucine 450 the composition is skewed to basic and acidic residues. Positions threonine 474–alanine 484 are enriched in pro residues. Positions alanine 555–proline 597 are enriched in low complexity.

In terms of processing, auto-ubiquitinated. Post-translationally, the strongly acidic region might serve as a transcriptional activation domain, possibly regulated through phosphorylation by casein kinase II.

The catalysed reaction is S-ubiquitinyl-[E2 ubiquitin-conjugating enzyme]-L-cysteine + [acceptor protein]-L-lysine = [E2 ubiquitin-conjugating enzyme]-L-cysteine + N(6)-ubiquitinyl-[acceptor protein]-L-lysine.. In terms of biological role, evades nuclear antiviral defenses triggered by dsDNA viruses. Acts during the initial stages of lytic infection and the reactivation of latent viral genome. Prevents the antiviral effect of nuclear bodies by degrading host PML and SP100. This chain is E3 ubiquitin-protein ligase ICP0 (BICP0), found in Bos taurus (Bovine).